Consider the following 343-residue polypeptide: Ribosomal RNA small subunit methyltransferase C (343 aa).

This sequence belongs to the methyltransferase superfamily. RsmC family. In terms of assembly, monomer.

Its subcellular location is the cytoplasm. It carries out the reaction guanosine(1207) in 16S rRNA + S-adenosyl-L-methionine = N(2)-methylguanosine(1207) in 16S rRNA + S-adenosyl-L-homocysteine + H(+). In terms of biological role, specifically methylates the guanine in position 1207 of 16S rRNA in the 30S particle. The polypeptide is Ribosomal RNA small subunit methyltransferase C (Pseudoalteromonas atlantica (strain T6c / ATCC BAA-1087)).